A 339-amino-acid chain; its full sequence is Phosphoribosylformylglycinamidine cyclo-ligase (339 aa).

It belongs to the AIR synthase family.

It is found in the cytoplasm. The catalysed reaction is 2-formamido-N(1)-(5-O-phospho-beta-D-ribosyl)acetamidine + ATP = 5-amino-1-(5-phospho-beta-D-ribosyl)imidazole + ADP + phosphate + H(+). It participates in purine metabolism; IMP biosynthesis via de novo pathway; 5-amino-1-(5-phospho-D-ribosyl)imidazole from N(2)-formyl-N(1)-(5-phospho-D-ribosyl)glycinamide: step 2/2. The polypeptide is Phosphoribosylformylglycinamidine cyclo-ligase (Methanobrevibacter smithii (strain ATCC 35061 / DSM 861 / OCM 144 / PS)).